We begin with the raw amino-acid sequence, 370 residues long: Molybdenum import ATP-binding protein ModC (370 aa).

The ABC transporter domain maps to 1-232 (MLDIDVLRQQ…PDIPDFAAQR (232 aa)). 30-37 (GRSGAGKT) provides a ligand contact to ATP. Residues 292-363 (MVSVQNILAA…IKAMSLLRDE (72 aa)) form the Mop domain.

This sequence belongs to the ABC transporter superfamily. Molybdate importer (TC 3.A.1.8) family. The complex is composed of two ATP-binding proteins (ModC), two transmembrane proteins (ModB) and a solute-binding protein (ModA).

It localises to the cell inner membrane. It carries out the reaction molybdate(out) + ATP + H2O = molybdate(in) + ADP + phosphate + H(+). In terms of biological role, part of the ABC transporter complex ModABC involved in molybdenum import. Responsible for energy coupling to the transport system. The chain is Molybdenum import ATP-binding protein ModC from Rhodospirillum rubrum (strain ATCC 11170 / ATH 1.1.1 / DSM 467 / LMG 4362 / NCIMB 8255 / S1).